Consider the following 247-residue polypeptide: Suppressor of silencing P0 (247 aa).

The 20-residue stretch at 76-95 (LPRHLHYECLEWGLLCGTHP) folds into the F-box-like domain.

This sequence belongs to the polerovirus P0 protein family.

Suppressor of RNA-mediated gene silencing, also known as post-transcriptional gene silencing (PTGS), a mechanism of plant viral defense that limits the accumulation of viral RNAs. The P0 protein suppresses local PTGS using its F-box-like domain to mediate destabilization and degradation of the AGO1 protein, although not via an interaction with host SKP1A. Participates, together with the proteins P1 and P7, in the inhibition of the induction of aphid-induced host phytohormones. This could play a role in the attraction to the infected plants by aphids. This chain is Suppressor of silencing P0, found in Potato leafroll virus (strain Potato/Scotland/strain 1/1984) (PLrV).